A 287-amino-acid chain; its full sequence is Elongation factor Ts (287 aa).

The tract at residues 80–83 (TDFL) is involved in Mg(2+) ion dislocation from EF-Tu.

It belongs to the EF-Ts family.

The protein resides in the cytoplasm. In terms of biological role, associates with the EF-Tu.GDP complex and induces the exchange of GDP to GTP. It remains bound to the aminoacyl-tRNA.EF-Tu.GTP complex up to the GTP hydrolysis stage on the ribosome. In Pseudomonas fluorescens (strain SBW25), this protein is Elongation factor Ts.